A 334-amino-acid polypeptide reads, in one-letter code: N-chimaerin (334 aa).

Positions 1–10 (MPSKESWSGR) are enriched in polar residues. The interval 1–22 (MPSKESWSGRKTNRATVHKSKQ) is disordered. Position 67 is a phosphothreonine (T67). Residues 80 to 130 (VHNFKVHTFRGPHWCEYCANFMWGLIAQGVKCADCGLNVHKQCSKMVPNDC) form a Phorbol-ester/DAG-type zinc finger. The 192-residue stretch at 143–334 (CDLTTLVKAH…LLIKNEDILF (192 aa)) folds into the Rho-GAP domain. Residue T215 is modified to Phosphothreonine.

Interacts with EPHA4; effector of EPHA4 in axon guidance linking EPHA4 activation to RAC1 regulation. In terms of processing, phosphorylated. Phosphorylation is EPHA4 kinase activity-dependent. As to expression, in neurons in brain regions that are involved in learning and memory processes.

Its function is as follows. GTPase-activating protein for p21-rac and a phorbol ester receptor. Involved in the assembly of neuronal locomotor circuits as a direct effector of EPHA4 in axon guidance. This chain is N-chimaerin (Chn1), found in Rattus norvegicus (Rat).